The primary structure comprises 478 residues: Dihydrolipoyl dehydrogenase (478 aa).

Residues 34 to 49 (EKYI…GGTC), K58, and G122 each bind FAD. A disulfide bond links C49 and C54. NAD(+)-binding positions include 188–192 (GAGVI), E211, V245, and 276–279 (AVGR). FAD is bound by residues D319 and A327. H451 functions as the Proton acceptor in the catalytic mechanism.

This sequence belongs to the class-I pyridine nucleotide-disulfide oxidoreductase family. Homodimer. It depends on FAD as a cofactor.

The protein localises to the cytoplasm. The enzyme catalyses N(6)-[(R)-dihydrolipoyl]-L-lysyl-[protein] + NAD(+) = N(6)-[(R)-lipoyl]-L-lysyl-[protein] + NADH + H(+). Functionally, the branched-chain alpha-keto dehydrogenase complex catalyzes the overall conversion of alpha-keto acids to acyl-CoA and CO(2). It contains multiple copies of 3 enzymatic components: branched-chain alpha-keto acid decarboxylase (E1), lipoamide acyltransferase (E2) and lipoamide dehydrogenase (E3). This chain is Dihydrolipoyl dehydrogenase (lpd), found in Pseudomonas fluorescens.